A 307-amino-acid chain; its full sequence is Ribosomal RNA small subunit methyltransferase H (307 aa).

S-adenosyl-L-methionine contacts are provided by residues 34 to 36, aspartate 53, leucine 88, aspartate 102, and glutamine 109; that span reads GGH.

This sequence belongs to the methyltransferase superfamily. RsmH family.

The protein localises to the cytoplasm. It catalyses the reaction cytidine(1402) in 16S rRNA + S-adenosyl-L-methionine = N(4)-methylcytidine(1402) in 16S rRNA + S-adenosyl-L-homocysteine + H(+). In terms of biological role, specifically methylates the N4 position of cytidine in position 1402 (C1402) of 16S rRNA. The sequence is that of Ribosomal RNA small subunit methyltransferase H from Sulfurimonas denitrificans (strain ATCC 33889 / DSM 1251) (Thiomicrospira denitrificans (strain ATCC 33889 / DSM 1251)).